Consider the following 186-residue polypeptide: MLALISRLLDWFRSLFWKEEMELTLVGLQYSGKTTFVNVIASGQFSEDMIPTVGFNMRKVTKGNVTIKIWDIGGQPRFRSMWERYCRGVNAIVYMIDAAYREKIEASRNELHNLLDKPQLQGIPVLVLGNKRDLPNALDEKQLIEKMNLSAIQDREICCYSISCKEKDNIDITLQWLIQHSKSRRS.

An intramembrane region (note=Mediates targeting to membranes) is located at residues 1-19 (MLALISRLLDWFRSLFWKE). GTP is bound by residues 29 to 35 (QYSGKTT), 71 to 75 (DIGGQ), and 130 to 133 (NKRD). A Glycyl lysine isopeptide (Lys-Gly) (interchain with G-Cter in ubiquitin) cross-link involves residue Lys141.

The protein belongs to the small GTPase superfamily. Arf family. Interacts with tubulin. Interacts with BORCS5; recruits ARL8B to lysosomes. Interacts with VPS41; the interaction mediates the recruitment of the HOPS complex to lysosomes. Interacts (GTP-bound form) with PLEKHM2 (via RUN domain); the interaction is required to recruit the motor protein kinesin-1 on lysosomes. Interacts (GTP-bound form) with PLEKHM1 (via RUN domain); the interaction is required for PLEKHM1 localization to lysosomes and for ARL8B function in delivery and degradation of endocytic and autophagic cargo in lysosomes. PLEKHM1 and PLEKHM2 compete for interaction with ARL8B. Interacts (GTP-bound form) with RUFY1; the interaction is required for RUFY1 endosomal location. When GTP-bound, interacts with RUFY3 and RUFY4, but not with RUFY1, nor RUFY2. Post-translationally, ubiquitinated at Lys-141 by RNF167, leading to its degradation.

It is found in the late endosome membrane. It localises to the lysosome membrane. Its subcellular location is the cytoplasm. The protein resides in the cytoskeleton. The protein localises to the spindle. It is found in the cell projection. It localises to the axon. Its subcellular location is the synapse. The protein resides in the cytolytic granule membrane. The protein localises to the early endosome membrane. It catalyses the reaction GTP + H2O = GDP + phosphate + H(+). Small GTPase which cycles between active GTP-bound and inactive GDP-bound states. In its active state, binds to a variety of effector proteins playing a key role in the regulation of lysosomal positioning which is important for nutrient sensing, natural killer cell-mediated cytotoxicity and antigen presentation. Along with its effectors, orchestrates lysosomal transport and fusion. Localizes specifically to lysosomal membranes and mediates anterograde lysosomal motility by recruiting PLEKHM2, which in turn recruits the motor protein kinesin-1 on lysosomes. Required for lysosomal and cytolytic granule exocytosis. Critical factor involved in NK cell-mediated cytotoxicity. Drives the polarization of cytolytic granules and microtubule-organizing centers (MTOCs) toward the immune synapse between effector NK lymphocytes and target cells. In neurons, mediates the anterograde axonal long-range transport of presynaptic lysosome-related vesicles required for presynaptic biogenesis and synaptic function. Also acts as a regulator of endosome to lysosome trafficking pathways of special significance for host defense. Recruits RUFY1 onto early endosomes regulating endosomes to trans-Golgi network proteins retrieval. Regulates cargo trafficking to lysosomes by binding to PLEKHM1 and recruiting the HOPS subunit VPS41, resulting in functional assembly of the HOPS complex on lysosomal membranes. Plays an important role in cargo delivery to lysosomes for antigen presentation and microbial killing. Directs the intersection of CD1d with lipid antigens in lysosomes, and plays a role in intersecting phagosomes with lysosomes to generate phagolysosomes that kill microbes. Involved in the process of MHC II presentation. Regulates the delivery of antigens to lysosomes and the formation of MHC II-peptide complexes through the recruitment of the HOPS complex to lysosomes allowing the fusion of late endosomes to lysosomes. May play a role in chromosome segregation. This is ADP-ribosylation factor-like protein 8B (ARL8B) from Pongo abelii (Sumatran orangutan).